Here is a 459-residue protein sequence, read N- to C-terminus: uncharacterized protein (459 aa).

In terms of domain architecture, TRAM spans 9–67 (KLEVGQTFPVTIKRLGINGEGVGYFKRQVVFIPGALPGEEVVAETTKIQRGFAEAKVKK). [4Fe-4S] cluster-binding residues include Cys-80, Cys-86, Cys-89, and Cys-168. S-adenosyl-L-methionine contacts are provided by Gln-292, Tyr-321, Asp-342, and Asp-390. Residue Cys-417 is the Nucleophile of the active site.

It belongs to the class I-like SAM-binding methyltransferase superfamily. RNA M5U methyltransferase family.

This is an uncharacterized protein from Bacillus cereus (strain ATCC 10987 / NRS 248).